The primary structure comprises 485 residues: D-alanine--D-alanyl carrier protein ligase (485 aa).

An ATP-binding site is contributed by 144-145 (TS). Residue aspartate 189 coordinates D-alanine. Residue 284–289 (NTYGPT) participates in ATP binding. A D-alanine-binding site is contributed by valine 293. Residues aspartate 365 and lysine 473 each coordinate ATP. Lysine 473 provides a ligand contact to D-alanine.

Belongs to the ATP-dependent AMP-binding enzyme family. DltA subfamily.

It localises to the cytoplasm. The catalysed reaction is holo-[D-alanyl-carrier protein] + D-alanine + ATP = D-alanyl-[D-alanyl-carrier protein] + AMP + diphosphate. Its pathway is cell wall biogenesis; lipoteichoic acid biosynthesis. Functionally, catalyzes the first step in the D-alanylation of lipoteichoic acid (LTA), the activation of D-alanine and its transfer onto the D-alanyl carrier protein (Dcp) DltC. In an ATP-dependent two-step reaction, forms a high energy D-alanyl-AMP intermediate, followed by transfer of the D-alanyl residue as a thiol ester to the phosphopantheinyl prosthetic group of the Dcp. D-alanylation of LTA plays an important role in modulating the properties of the cell wall in Gram-positive bacteria, influencing the net charge of the cell wall. The chain is D-alanine--D-alanyl carrier protein ligase from Staphylococcus haemolyticus (strain JCSC1435).